We begin with the raw amino-acid sequence, 284 residues long: Alpha-S1-casein (284 aa).

An N-terminal signal peptide occupies residues 1–15 (MKLLILTCLVAAALA). Disordered stretches follow at residues 21–44 (RRNAVSSQTQQENSSSEEQEIVKQ) and 78–111 (SSAEEQATASAQEDSSSSSSSSEESKDAIPSATE). 2 stretches are compositionally biased toward low complexity: residues 24 to 36 (AVSSQTQQENSSS) and 78 to 99 (SSAEEQATASAQEDSSSSSSSS). Phosphoserine is present on residues Ser-79, Ser-93, Ser-94, Ser-95, Ser-96, Ser-97, Ser-98, and Ser-99. Repeat copies occupy residues 138–143 (LLQQAS), 144–149 (LAQQAS), 150–155 (LAQQAS), 156–161 (LAQQAL), 162–167 (LAQQPS), 168–173 (LAQQAA), 174–179 (LAQQAS), 180–185 (LAQQAS), 186–191 (LAQQAS), and 192–197 (LAQKHH). A 10 X 6 AA tandem repeats region spans residues 138-197 (LLQQASLAQQASLAQQASLAQQALLAQQPSLAQQAALAQQASLAQQASLAQQASLAQKHH).

The protein belongs to the alpha-casein family. As to expression, mammary gland specific. Secreted in milk.

Its subcellular location is the secreted. In terms of biological role, important role in the capacity of milk to transport calcium phosphate. The chain is Alpha-S1-casein (Csn1s1) from Rattus norvegicus (Rat).